Reading from the N-terminus, the 291-residue chain is 4-hydroxy-tetrahydrodipicolinate synthase (291 aa).

Residue threonine 44 participates in pyruvate binding. The active-site Proton donor/acceptor is the tyrosine 132. The Schiff-base intermediate with substrate role is filled by lysine 160. Residue isoleucine 202 coordinates pyruvate.

This sequence belongs to the DapA family. In terms of assembly, homotetramer; dimer of dimers.

The protein localises to the cytoplasm. The catalysed reaction is L-aspartate 4-semialdehyde + pyruvate = (2S,4S)-4-hydroxy-2,3,4,5-tetrahydrodipicolinate + H2O + H(+). Its pathway is amino-acid biosynthesis; L-lysine biosynthesis via DAP pathway; (S)-tetrahydrodipicolinate from L-aspartate: step 3/4. Catalyzes the condensation of (S)-aspartate-beta-semialdehyde [(S)-ASA] and pyruvate to 4-hydroxy-tetrahydrodipicolinate (HTPA). This Parvibaculum lavamentivorans (strain DS-1 / DSM 13023 / NCIMB 13966) protein is 4-hydroxy-tetrahydrodipicolinate synthase.